The sequence spans 168 residues: Ribosome maturation factor RimM (168 aa).

The 74-residue stretch at 94-167 (DGQYYYHQII…FVTVELMEGL (74 aa)) folds into the PRC barrel domain.

Belongs to the RimM family. As to quaternary structure, binds ribosomal protein uS19.

It localises to the cytoplasm. In terms of biological role, an accessory protein needed during the final step in the assembly of 30S ribosomal subunit, possibly for assembly of the head region. Essential for efficient processing of 16S rRNA. May be needed both before and after RbfA during the maturation of 16S rRNA. It has affinity for free ribosomal 30S subunits but not for 70S ribosomes. The polypeptide is Ribosome maturation factor RimM (Limosilactobacillus reuteri (strain DSM 20016) (Lactobacillus reuteri)).